The chain runs to 281 residues: MELILISGLSGSGKSVALNLLEDSGYYCVDNLPVVMLTVLIGMLKEEHVHKVAVAIDARSGHGIDLLPGKLDKLKRSGINLTFLFLFSHEETLLKRYSESRRRHPLATKGQTLEEAIRAERALLDPISDLGHRIDTSGMKANALREWVRQFIEAEPGQGLTLMFESFGFKYGIPLDADLVFDVRCLPNPHYDPELRPFNGKDKPIIDFLEGEDEVCRMRDDIARFVDTWLPCYIRDNRNYLTVAIGCTGGQHRSVYIAEWLAGEFANRARVLVRHRTLAGT.

8-15 (GLSGSGKS) lines the ATP pocket. Position 57-60 (57-60 (DARS)) interacts with GTP.

Belongs to the RapZ-like family.

Displays ATPase and GTPase activities. This Dechloromonas aromatica (strain RCB) protein is Nucleotide-binding protein Daro_0070.